Here is a 79-residue protein sequence, read N- to C-terminus: Dolichyl-diphosphooligosaccharide--protein glycosyltransferase subunit TMEM258 (79 aa).

Methionine 1 bears the N-acetylmethionine mark. The next 2 helical transmembrane spans lie at 17 to 37 (VFPH…AWFF) and 59 to 79 (VASL…GIYI).

This sequence belongs to the OST5 family. Component of the oligosaccharyltransferase (OST) complex. OST exists in two different complex forms which contain common core subunits RPN1, RPN2, OST48, OST4, DAD1 and TMEM258, either STT3A or STT3B as catalytic subunits, and form-specific accessory subunits. STT3A complex assembly occurs through the formation of 3 subcomplexes. Subcomplex 1 contains RPN1 and TMEM258, subcomplex 2 contains the STT3A-specific subunits STT3A, DC2/OSTC, and KCP2 as well as the core subunit OST4, and subcomplex 3 contains RPN2, DAD1, and OST48. The STT3A complex can form stable complexes with the Sec61 complex or with both the Sec61 and TRAP complexes.

Its subcellular location is the membrane. The protein localises to the endoplasmic reticulum. It is found in the cytoplasm. It functions in the pathway protein modification; protein glycosylation. Functionally, subunit of the oligosaccharyl transferase (OST) complex that catalyzes the initial transfer of a defined glycan (Glc(3)Man(9)GlcNAc(2) in eukaryotes) from the lipid carrier dolichol-pyrophosphate to an asparagine residue within an Asn-X-Ser/Thr consensus motif in nascent polypeptide chains, the first step in protein N-glycosylation. N-glycosylation occurs cotranslationally and the complex associates with the Sec61 complex at the channel-forming translocon complex that mediates protein translocation across the endoplasmic reticulum (ER). All subunits are required for a maximal enzyme activity. Involved in ER homeostasis in the colonic epithelium. This Bos taurus (Bovine) protein is Dolichyl-diphosphooligosaccharide--protein glycosyltransferase subunit TMEM258.